Reading from the N-terminus, the 219-residue chain is Cytochrome b6 (219 aa).

A helical transmembrane segment spans residues 32–52; the sequence is IFYCFGGIVLTCFIIQAATGF. Heme c is bound at residue Cys35. 2 residues coordinate heme b: His86 and His100. A run of 3 helical transmembrane segments spans residues 90–110, 116–136, and 190–210; these read SGLMVLVLLLHVSRVYLTAGF, LTWISGVILAICTVSFGVTGY, and AHTFILPLVTLALLLTHFLMI. His191 and His206 together coordinate heme b.

This sequence belongs to the cytochrome b family. PetB subfamily. In terms of assembly, the 4 large subunits of the cytochrome b6-f complex are cytochrome b6, subunit IV (17 kDa polypeptide, PetD), cytochrome f and the Rieske protein, while the 4 small subunits are PetG, PetL, PetM and PetN. The complex functions as a dimer. The cofactor is heme b. It depends on heme c as a cofactor.

The protein resides in the plastid. Its subcellular location is the chloroplast thylakoid membrane. Component of the cytochrome b6-f complex, which mediates electron transfer between photosystem II (PSII) and photosystem I (PSI), cyclic electron flow around PSI, and state transitions. The chain is Cytochrome b6 from Amphidinium operculatum (Dinoflagellate).